A 956-amino-acid polypeptide reads, in one-letter code: Endogenous retrovirus group K member 8 Pol protein (956 aa).

The 189-residue stretch at 57-245 folds into the Reverse transcriptase domain; sequence LEKGHIEPSF…TPFHYLGMQI (189 aa). The short motif at 161 to 164 is the LPQG element; the sequence is LPQG. Positions 195 to 198 match the YXDD motif; that stretch reads YIDD. The 131-residue stretch at 460–590 folds into the RNase H type-1 domain; the sequence is LENALTVFTD…ADLLVSSALI (131 aa). Positions 469, 497, 517, and 582 each coordinate Mg(2+). The Integrase-type zinc-finger motif lies at 587–628; the sequence is SALIKAQELHALTHVNAAGLKNKFDVTWKQAKDIVQHCTQCQ. Residues His-596, His-600, Cys-624, and Cys-627 each contribute to the Zn(2+) site. The Integrase catalytic domain occupies 642-803; it reads RGLCPNALWQ…TSAEQHLTGK (162 aa). Residues 811–859 constitute a DNA-binding region (integrase-type); that stretch reads KLIWWKDNKNKTWEIGKVITWGRGFACVSPGENQLPVWIPTRHLKFYNE. Residues 864–890 are disordered; that stretch reads AKKSTSAETETPQSSTVDSQDEQNGDV. The span at 869–881 shows a compositional bias: polar residues; sequence SAETETPQSSTVD.

The protein belongs to the beta type-B retroviral polymerase family. HERV class-II K(HML-2) pol subfamily.

It catalyses the reaction DNA(n) + a 2'-deoxyribonucleoside 5'-triphosphate = DNA(n+1) + diphosphate. The enzyme catalyses Endonucleolytic cleavage to 5'-phosphomonoester.. Its function is as follows. Early post-infection, the reverse transcriptase converts the viral RNA genome into double-stranded viral DNA. The RNase H domain of the reverse transcriptase performs two functions. It degrades the RNA template and specifically removes the RNA primer from the RNA/DNA hybrid. Following nuclear import, the integrase catalyzes the insertion of the linear, double-stranded viral DNA into the host cell chromosome. Endogenous Pol proteins may have kept, lost or modified their original function during evolution. The polypeptide is Endogenous retrovirus group K member 8 Pol protein (ERVK-8) (Homo sapiens (Human)).